The sequence spans 402 residues: uncharacterized protein (402 aa).

12 helical membrane passes run 23–43 (IVSV…PLAV), 52–72 (LGYG…ATLL), 90–110 (VLYG…SVAI), 121–141 (LLVG…AAIG), 158–178 (WNGI…VLLV), 180–200 (WLGL…GFAL), 228–248 (GMGL…ITLY), 255–275 (ANAV…RLLF), 282–302 (LGGF…LLLL), 309–329 (WVGL…FPAF), 351–371 (LFVD…ANLF), and 375–395 (SMFL…IALH).

The protein belongs to the major facilitator superfamily. YhhS family.

Its subcellular location is the cell inner membrane. This is an uncharacterized protein from Pseudomonas aeruginosa (strain UCBPP-PA14).